Consider the following 192-residue polypeptide: A-type ATP synthase subunit E (192 aa).

The interval 1-66 (MSLDTVVEDI…QERDQKLSSA (66 aa)) is disordered. Over residues 8–26 (EDIRDEARARADEIRSEGE) the composition is skewed to basic and acidic residues. The segment covering 27–49 (ERAEEIIDEAEREADDIVDEAER) has biased composition (acidic residues). The span at 50-66 (EAERKISQERDQKLSSA) shows a compositional bias: basic and acidic residues.

It belongs to the V-ATPase E subunit family. As to quaternary structure, has multiple subunits with at least A(3), B(3), C, D, E, F, H, I and proteolipid K(x).

The protein localises to the cell membrane. Functionally, component of the A-type ATP synthase that produces ATP from ADP in the presence of a proton gradient across the membrane. This chain is A-type ATP synthase subunit E, found in Natronomonas pharaonis (strain ATCC 35678 / DSM 2160 / CIP 103997 / JCM 8858 / NBRC 14720 / NCIMB 2260 / Gabara) (Halobacterium pharaonis).